We begin with the raw amino-acid sequence, 297 residues long: Probable endonuclease 4 (297 aa).

9 residues coordinate Zn(2+): histidine 68, histidine 109, glutamate 144, aspartate 178, histidine 181, histidine 213, aspartate 226, histidine 228, and glutamate 258.

Belongs to the AP endonuclease 2 family. It depends on Zn(2+) as a cofactor.

The catalysed reaction is Endonucleolytic cleavage to 5'-phosphooligonucleotide end-products.. Endonuclease IV plays a role in DNA repair. It cleaves phosphodiester bonds at apurinic or apyrimidinic (AP) sites, generating a 3'-hydroxyl group and a 5'-terminal sugar phosphate. The polypeptide is Probable endonuclease 4 (Lysinibacillus sphaericus (strain C3-41)).